Here is an 808-residue protein sequence, read N- to C-terminus: DNA gyrase subunit B (808 aa).

The Toprim domain occupies 429–544 (SELFIVEGDS…KGYLYIAQPP (116 aa)). The Mg(2+) site is built by E435, D509, and D511.

The protein belongs to the type II topoisomerase GyrB family. Heterotetramer, composed of two GyrA and two GyrB chains. In the heterotetramer, GyrA contains the active site tyrosine that forms a transient covalent intermediate with DNA, while GyrB binds cofactors and catalyzes ATP hydrolysis. Mg(2+) serves as cofactor. Requires Mn(2+) as cofactor. It depends on Ca(2+) as a cofactor.

Its subcellular location is the cytoplasm. The catalysed reaction is ATP-dependent breakage, passage and rejoining of double-stranded DNA.. Functionally, a type II topoisomerase that negatively supercoils closed circular double-stranded (ds) DNA in an ATP-dependent manner to modulate DNA topology and maintain chromosomes in an underwound state. Negative supercoiling favors strand separation, and DNA replication, transcription, recombination and repair, all of which involve strand separation. Also able to catalyze the interconversion of other topological isomers of dsDNA rings, including catenanes and knotted rings. Type II topoisomerases break and join 2 DNA strands simultaneously in an ATP-dependent manner. This Rickettsia bellii (strain RML369-C) protein is DNA gyrase subunit B.